A 364-amino-acid chain; its full sequence is Aminomethyltransferase (364 aa).

It belongs to the GcvT family. As to quaternary structure, the glycine cleavage system is composed of four proteins: P, T, L and H.

It catalyses the reaction N(6)-[(R)-S(8)-aminomethyldihydrolipoyl]-L-lysyl-[protein] + (6S)-5,6,7,8-tetrahydrofolate = N(6)-[(R)-dihydrolipoyl]-L-lysyl-[protein] + (6R)-5,10-methylene-5,6,7,8-tetrahydrofolate + NH4(+). In terms of biological role, the glycine cleavage system catalyzes the degradation of glycine. The protein is Aminomethyltransferase of Salmonella arizonae (strain ATCC BAA-731 / CDC346-86 / RSK2980).